The chain runs to 498 residues: GTPase Der (498 aa).

2 EngA-type G domains span residues P3–L167 and I210–T383. Residues G9–S16, D57–I61, N119–D122, G216–S223, D263–V267, and N328–D331 contribute to the GTP site. The 85-residue stretch at T384–D468 folds into the KH-like domain.

Belongs to the TRAFAC class TrmE-Era-EngA-EngB-Septin-like GTPase superfamily. EngA (Der) GTPase family. As to quaternary structure, associates with the 50S ribosomal subunit.

Its function is as follows. GTPase that plays an essential role in the late steps of ribosome biogenesis. This Vibrio campbellii (strain ATCC BAA-1116) protein is GTPase Der.